Here is a 695-residue protein sequence, read N- to C-terminus: Spermidine/spermine N(1)-acetyltransferase-like protein 1 (695 aa).

Composition is skewed to polar residues over residues 1–39, 52–68, and 78–98; these read MNQSGTNQSSLSDSNQAGINQPSTNSLGMNQMDMNQGSA, PSMSQAGMRQSGTNLPD, and DTWQLGRSQPGMLQQELSQLV. Disordered stretches follow at residues 1–274, 290–332, 344–375, and 387–493; these read MNQS…MNQM, DMKQ…PGMW, ASISQPGPPQRAPSQSGPRQSSTSQAGTNQSG, and RQSG…GLSQ. A compositionally biased stretch (low complexity) spans 105-122; that stretch reads SQPDPSQPGPSQSGPSQS. 7 stretches are compositionally biased toward polar residues: residues 123 to 179, 197 to 208, 231 to 266, 294 to 310, 355 to 375, 389 to 422, and 459 to 471; these read RMRQ…TGLS, GVQQPGISQQVP, PDTSQSCKNQTDMSQPDANQSSLSDSNQTGIIQPSP, PSMSQAGMRQSGTNLPD, APSQSGPRQSSTSQAGTNQSG, SGGSQPSMRQVGTSQSGTSQIGMSQPGTWQTGLS, and PGTSQSSKNQTGM. An N-acetyltransferase domain is found at 529–695; that stretch reads FQIRHAEAGD…EELLDMAWEE (167 aa). Substrate is bound at residue 552–553; the sequence is CE. Acetyl-CoA is bound by residues 618 to 620 and 626 to 631; these read FYV and GLGIGA. Residues 650–652 and Glu-676 contribute to the substrate site; that span reads HFL.

It belongs to the acetyltransferase family.

The polypeptide is Spermidine/spermine N(1)-acetyltransferase-like protein 1 (SATL1) (Homo sapiens (Human)).